The primary structure comprises 479 residues: Anaerobic nitric oxide reductase flavorubredoxin (479 aa).

A zinc metallo-hydrolase region spans residues 30–210 (LRGSSYNSYL…PFSRLVTPKI (181 aa)). Residues His-79, Glu-81, Asp-83, His-147, Asp-166, and His-227 each coordinate Fe cation. The Flavodoxin-like domain occupies 254–393 (ITIFYDTMSN…LCREHGREIA (140 aa)). FMN is bound by residues 260–264 (TMSNN) and 342–369 (AFGS…EMSL). Residues 423 to 474 (GPRMQCSVCQWIYDPAKGEPMQDVAPGTPWSEVPDNFLCPECSLGKDVFDEL) enclose the Rubredoxin-like domain. Fe cation is bound by residues Cys-428, Cys-431, Cys-461, and Cys-464.

This sequence in the N-terminal section; belongs to the zinc metallo-hydrolase group 3 family. Homotetramer. It depends on Fe cation as a cofactor. FMN is required as a cofactor.

The protein resides in the cytoplasm. Its pathway is nitrogen metabolism; nitric oxide reduction. Its function is as follows. Anaerobic nitric oxide reductase; uses NADH to detoxify nitric oxide (NO), protecting several 4Fe-4S NO-sensitive enzymes. Has at least 2 reductase partners, only one of which (NorW, flavorubredoxin reductase) has been identified. NO probably binds to the di-iron center; electrons enter from the NorW at rubredoxin and are transferred sequentially to the FMN center and the di-iron center. Also able to function as an aerobic oxygen reductase. This Escherichia coli O6:H1 (strain CFT073 / ATCC 700928 / UPEC) protein is Anaerobic nitric oxide reductase flavorubredoxin.